Reading from the N-terminus, the 335-residue chain is Ketol-acid reductoisomerase (NADP(+)) (335 aa).

The KARI N-terminal Rossmann domain maps to Met-1–Thr-182. Residues Tyr-25–Gln-28, Arg-48, Ser-51, Ser-53, and Asp-83–Gln-86 contribute to the NADP(+) site. Residue His-108 is part of the active site. Gly-134 contributes to the NADP(+) binding site. Positions Thr-183–Leu-328 constitute a KARI C-terminal knotted domain. Mg(2+)-binding residues include Asp-191, Glu-195, Glu-227, and Glu-231. Substrate is bound at residue Ser-252.

This sequence belongs to the ketol-acid reductoisomerase family. Mg(2+) is required as a cofactor.

The enzyme catalyses (2R)-2,3-dihydroxy-3-methylbutanoate + NADP(+) = (2S)-2-acetolactate + NADPH + H(+). It catalyses the reaction (2R,3R)-2,3-dihydroxy-3-methylpentanoate + NADP(+) = (S)-2-ethyl-2-hydroxy-3-oxobutanoate + NADPH + H(+). The protein operates within amino-acid biosynthesis; L-isoleucine biosynthesis; L-isoleucine from 2-oxobutanoate: step 2/4. Its pathway is amino-acid biosynthesis; L-valine biosynthesis; L-valine from pyruvate: step 2/4. Involved in the biosynthesis of branched-chain amino acids (BCAA). Catalyzes an alkyl-migration followed by a ketol-acid reduction of (S)-2-acetolactate (S2AL) to yield (R)-2,3-dihydroxy-isovalerate. In the isomerase reaction, S2AL is rearranged via a Mg-dependent methyl migration to produce 3-hydroxy-3-methyl-2-ketobutyrate (HMKB). In the reductase reaction, this 2-ketoacid undergoes a metal-dependent reduction by NADPH to yield (R)-2,3-dihydroxy-isovalerate. The polypeptide is Ketol-acid reductoisomerase (NADP(+)) (Methanosarcina acetivorans (strain ATCC 35395 / DSM 2834 / JCM 12185 / C2A)).